The primary structure comprises 586 residues: CTP synthase (586 aa).

The segment at Met-1–Leu-278 is amidoligase domain. CTP is bound at residue Ser-20. Ser-20 provides a ligand contact to UTP. ATP contacts are provided by residues Ser-21–Leu-26 and Asp-78. Positions 78 and 152 each coordinate Mg(2+). Residues Asp-159–Glu-161, Lys-199–Gln-204, and Lys-235 each bind CTP. UTP is bound by residues Lys-199–Gln-204 and Lys-235. The Glutamine amidotransferase type-1 domain maps to Arg-303–Gly-551. Gly-366 contacts L-glutamine. The Nucleophile; for glutamine hydrolysis role is filled by Cys-393. Residues Leu-394–Gln-397, Glu-416, and Arg-477 each bind L-glutamine. Active-site residues include His-524 and Glu-526. A disordered region spans residues Glu-560–Gly-586.

Belongs to the CTP synthase family. Homotetramer.

It catalyses the reaction UTP + L-glutamine + ATP + H2O = CTP + L-glutamate + ADP + phosphate + 2 H(+). The catalysed reaction is L-glutamine + H2O = L-glutamate + NH4(+). The enzyme catalyses UTP + NH4(+) + ATP = CTP + ADP + phosphate + 2 H(+). Its pathway is pyrimidine metabolism; CTP biosynthesis via de novo pathway; CTP from UDP: step 2/2. With respect to regulation, allosterically activated by GTP, when glutamine is the substrate; GTP has no effect on the reaction when ammonia is the substrate. The allosteric effector GTP functions by stabilizing the protein conformation that binds the tetrahedral intermediate(s) formed during glutamine hydrolysis. Inhibited by the product CTP, via allosteric rather than competitive inhibition. Functionally, catalyzes the ATP-dependent amination of UTP to CTP with either L-glutamine or ammonia as the source of nitrogen. Regulates intracellular CTP levels through interactions with the four ribonucleotide triphosphates. The sequence is that of CTP synthase from Mycobacterium tuberculosis (strain ATCC 25177 / H37Ra).